We begin with the raw amino-acid sequence, 447 residues long: N-succinylarginine dihydrolase (447 aa).

Substrate contacts are provided by residues 19-28 (GGLAVGNIAS), asparagine 110, and 137-138 (HR). Glutamate 174 is a catalytic residue. Arginine 213 is a substrate binding site. Residue histidine 249 is part of the active site. Aspartate 251 and asparagine 362 together coordinate substrate. The active-site Nucleophile is cysteine 368.

This sequence belongs to the succinylarginine dihydrolase family. As to quaternary structure, homodimer.

It carries out the reaction N(2)-succinyl-L-arginine + 2 H2O + 2 H(+) = N(2)-succinyl-L-ornithine + 2 NH4(+) + CO2. It functions in the pathway amino-acid degradation; L-arginine degradation via AST pathway; L-glutamate and succinate from L-arginine: step 2/5. Functionally, catalyzes the hydrolysis of N(2)-succinylarginine into N(2)-succinylornithine, ammonia and CO(2). The polypeptide is N-succinylarginine dihydrolase (Nitrosospira multiformis (strain ATCC 25196 / NCIMB 11849 / C 71)).